The primary structure comprises 47 residues: Large ribosomal subunit protein bL34 (47 aa).

Belongs to the bacterial ribosomal protein bL34 family.

This Rhodococcus erythropolis (strain PR4 / NBRC 100887) protein is Large ribosomal subunit protein bL34.